The chain runs to 294 residues: Energy-coupling factor transporter ATP-binding protein EcfA1 (294 aa).

An ABC transporter domain is found at 27–260 (IEFENVYFAY…EERLLKMQLD (234 aa)). 60-67 (GHNGSGKS) contacts ATP.

The protein belongs to the ABC transporter superfamily. Energy-coupling factor EcfA family. Forms a stable energy-coupling factor (ECF) transporter complex composed of 2 membrane-embedded substrate-binding proteins (S component), 2 ATP-binding proteins (A component) and 2 transmembrane proteins (T component).

The protein localises to the cell membrane. Functionally, ATP-binding (A) component of a common energy-coupling factor (ECF) ABC-transporter complex. Unlike classic ABC transporters this ECF transporter provides the energy necessary to transport a number of different substrates. The sequence is that of Energy-coupling factor transporter ATP-binding protein EcfA1 from Ureaplasma parvum serovar 3 (strain ATCC 700970).